Reading from the N-terminus, the 868-residue chain is DNA topoisomerase 1 (868 aa).

The region spanning 3–148 (KSLVIVESPA…RFSRVVFNEI (146 aa)) is the Toprim domain. Residues Glu-9 and Asp-117 each coordinate Mg(2+). In terms of domain architecture, Topo IA-type catalytic spans 164 to 581 (NLDRVNAQQT…QFFKDFSQQL (418 aa)). The segment at 198 to 203 (SAGRVQ) is interaction with DNA. Tyr-325 serves as the catalytic O-(5'-phospho-DNA)-tyrosine intermediate. C4-type zinc fingers lie at residues 605–636 (CPTCGRKMAIRTASTGVFLGCSGYALPPKERC), 667–694 (CPKCGTAMDSYLIDPERKIHICGHNPNC), and 716–739 (CDKCGADMHLKLGRFGKYMGCTSC).

It belongs to the type IA topoisomerase family. As to quaternary structure, monomer. It depends on Mg(2+) as a cofactor.

The enzyme catalyses ATP-independent breakage of single-stranded DNA, followed by passage and rejoining.. In terms of biological role, releases the supercoiling and torsional tension of DNA, which is introduced during the DNA replication and transcription, by transiently cleaving and rejoining one strand of the DNA duplex. Introduces a single-strand break via transesterification at a target site in duplex DNA. The scissile phosphodiester is attacked by the catalytic tyrosine of the enzyme, resulting in the formation of a DNA-(5'-phosphotyrosyl)-enzyme intermediate and the expulsion of a 3'-OH DNA strand. The free DNA strand then undergoes passage around the unbroken strand, thus removing DNA supercoils. Finally, in the religation step, the DNA 3'-OH attacks the covalent intermediate to expel the active-site tyrosine and restore the DNA phosphodiester backbone. This chain is DNA topoisomerase 1, found in Pasteurella multocida (strain Pm70).